A 612-amino-acid polypeptide reads, in one-letter code: Elongation factor 4 (612 aa).

The tr-type G domain occupies 12–194; sequence SRIRNFSIIA…QIVEKVPAPS (183 aa). Residues 24–29 and 141–144 each bind GTP; these read DHGKST and NKID.

Belongs to the TRAFAC class translation factor GTPase superfamily. Classic translation factor GTPase family. LepA subfamily.

It is found in the cell membrane. It carries out the reaction GTP + H2O = GDP + phosphate + H(+). Required for accurate and efficient protein synthesis under certain stress conditions. May act as a fidelity factor of the translation reaction, by catalyzing a one-codon backward translocation of tRNAs on improperly translocated ribosomes. Back-translocation proceeds from a post-translocation (POST) complex to a pre-translocation (PRE) complex, thus giving elongation factor G a second chance to translocate the tRNAs correctly. Binds to ribosomes in a GTP-dependent manner. The polypeptide is Elongation factor 4 (Bacillus licheniformis (strain ATCC 14580 / DSM 13 / JCM 2505 / CCUG 7422 / NBRC 12200 / NCIMB 9375 / NCTC 10341 / NRRL NRS-1264 / Gibson 46)).